The following is a 346-amino-acid chain: UDP-3-O-acylglucosamine N-acyltransferase (346 aa).

The active-site Proton acceptor is histidine 240.

Belongs to the transferase hexapeptide repeat family. LpxD subfamily. As to quaternary structure, homotrimer.

The catalysed reaction is a UDP-3-O-[(3R)-3-hydroxyacyl]-alpha-D-glucosamine + a (3R)-hydroxyacyl-[ACP] = a UDP-2-N,3-O-bis[(3R)-3-hydroxyacyl]-alpha-D-glucosamine + holo-[ACP] + H(+). It participates in bacterial outer membrane biogenesis; LPS lipid A biosynthesis. Catalyzes the N-acylation of UDP-3-O-acylglucosamine using 3-hydroxyacyl-ACP as the acyl donor. Is involved in the biosynthesis of lipid A, a phosphorylated glycolipid that anchors the lipopolysaccharide to the outer membrane of the cell. The protein is UDP-3-O-acylglucosamine N-acyltransferase of Bacteroides fragilis (strain ATCC 25285 / DSM 2151 / CCUG 4856 / JCM 11019 / LMG 10263 / NCTC 9343 / Onslow / VPI 2553 / EN-2).